A 632-amino-acid chain; its full sequence is Palmitoyltransferase ZDHHC17 (632 aa).

The Cytoplasmic portion of the chain corresponds to 1 to 304; the sequence is MQREEGFNTK…LKADKEFRQK (304 aa). The tract at residues 11-305 is necessary and sufficient for interaction with DNAJC5 and SNAP25; it reads MADGPDEYDT…KADKEFRQKV (295 aa). ANK repeat units follow at residues 51–86, 89–118, 123–152, 156–185, 189–219, 224–253, and 257–286; these read THID…VRQP, ENVT…IVDQ, LNST…DPSL, EGCS…DVDM, NGMT…SVNL, HKNT…NVDA, and KGES…AKGY. 2 helical membrane passes run 305-325 and 326-346; these read VMLG…DLNI and DSWL…QFLS. Over 347-357 the chain is Cytoplasmic; it reads KSFFDHSMHSA. A helical transmembrane segment spans residues 358 to 378; that stretch reads LPLGIYLATKFWMYVTWFFWF. Residues 379–381 lie on the Lumenal side of the membrane; it reads WND. Residues 382–402 traverse the membrane as a helical segment; sequence LNFLFIHLPFLANSVALFYNF. Topologically, residues 403 to 480 are cytoplasmic; that stretch reads GKSWKSDPGI…GNCVGAGNHR (78 aa). Residues 437–487 enclose the DHHC domain; that stretch reads IFCSTCLIRKPVRSKHCGVCNRCIAKFDHHCPWVGNCVGAGNHRYFMGYLF. Cys467 (S-palmitoyl cysteine intermediate) is an active-site residue. The chain crosses the membrane as a helical span at residues 481–501; that stretch reads YFMGYLFFLLFMICWMIYGCI. The Lumenal segment spans residues 502–529; sequence SYWGLHCETTYTKDGFWTYITQIATCSP. A helical transmembrane segment spans residues 530 to 550; the sequence is WMFWMFLNSVFHFMWVAVLLM. The Cytoplasmic segment spans residues 551-632; the sequence is CQMYQISCLG…QISGSGYQLV (82 aa).

This sequence belongs to the DHHC palmitoyltransferase family. AKR/ZDHHC17 subfamily. As to quaternary structure, interacts (via ANK repeats) with numerous proteins (via the consensus sequence motif [VIAP]-[VIT]-x-x-Q-P). Interacts (via ANK repeats) with CLIP3. Interacts (via ANK repeats) with HTT; this interaction is inversely correlated to the length of the polyglutamine tract added to the huntingtin protein in Huntington disease. Interacts (via ANK repeats) with DNAJC5 (via C-terminus). Interacts (via ANK repeats) with MAP6. Interacts (via ANK repeats) with SNAP23. Interacts (via ANK repeats) with SNAP25. Interacts (via ANK repeats) with EVL. Interacts with SPRED1 and SPRED3. Interacts with GPM6A and OPTN. May interact (via ANK repeats) with SPRED2. May interact with NTRK1; may regulate its localization and function. Post-translationally, autopalmitoylated. Autopalmitoylation has a regulatory role in ZDHHC17-mediated Mg(2+) transport. In terms of tissue distribution, expressed in all brain regions. Expression is highest in the cortex, cerebellum, occipital lobe and caudate and lowest in the spinal cord. Expression is also seen in testis, pancreas, heart and kidney.

Its subcellular location is the golgi apparatus membrane. The protein localises to the cytoplasmic vesicle membrane. The protein resides in the presynaptic cell membrane. The catalysed reaction is L-cysteinyl-[protein] + hexadecanoyl-CoA = S-hexadecanoyl-L-cysteinyl-[protein] + CoA. It carries out the reaction L-cysteinyl-[protein] + tetradecanoyl-CoA = S-tetradecanoyl-L-cysteinyl-[protein] + CoA. It catalyses the reaction L-cysteinyl-[protein] + octadecanoyl-CoA = S-octadecanoyl-L-cysteinyl-[protein] + CoA. Palmitoyltransferase that catalyzes the addition of palmitate onto various protein substrates and is involved in a variety of cellular processes. Has no stringent fatty acid selectivity and in addition to palmitate can also transfer onto target proteins myristate from tetradecanoyl-CoA and stearate from octadecanoyl-CoA. Palmitoyltransferase specific for a subset of neuronal proteins, including SNAP25, DLG4/PSD95, GAD2, SYT1 and HTT. Also palmitoylates neuronal protein GPM6A as well as SPRED1 and SPRED3. Could also play a role in axonogenesis through the regulation of NTRK1 and the downstream ERK1/ERK2 signaling cascade. May be involved in the sorting or targeting of critical proteins involved in the initiating events of endocytosis at the plasma membrane. May play a role in Mg(2+) transport. Could also palmitoylate DNAJC5 and regulate its localization to the Golgi membrane. Palmitoylates CASP6, thereby preventing its dimerization and subsequent activation. The protein is Palmitoyltransferase ZDHHC17 of Homo sapiens (Human).